Consider the following 222-residue polypeptide: Putative germin-like protein 3-2 (222 aa).

An N-terminal signal peptide occupies residues 1 to 22 (MAKLILATFAVVFLALAATSLA). A disulfide bridge connects residues C32 and C50. Residues N55 and N71 are each glycosylated (N-linked (GlcNAc...) asparagine). The region spanning 64–212 (DGLTNAGNTT…AFQVDGGMVE (149 aa)) is the Cupin type-1 domain. Mn(2+)-binding residues include H112, H114, E119, and H158. A glycan (N-linked (GlcNAc...) asparagine) is linked at N165.

It belongs to the germin family. In terms of assembly, oligomer (believed to be a pentamer but probably hexamer).

Its subcellular location is the secreted. It localises to the extracellular space. It is found in the apoplast. Functionally, may play a role in plant defense. Probably has no oxalate oxidase activity even if the active site is conserved. The sequence is that of Putative germin-like protein 3-2 from Oryza sativa subsp. japonica (Rice).